A 308-amino-acid chain; its full sequence is HPr kinase/phosphorylase (308 aa).

Residues His136 and Lys157 contribute to the active site. 151-158 lines the ATP pocket; it reads GESGIGKS. Ser158 is a binding site for Mg(2+). Asp175 serves as the catalytic Proton acceptor; for phosphorylation activity. Proton donor; for dephosphorylation activity. The important for the catalytic mechanism of both phosphorylation and dephosphorylation stretch occupies residues 198–207; sequence IEVRGMGIID. Position 199 (Glu199) interacts with Mg(2+). Arg240 is an active-site residue. Residues 261 to 266 form an important for the catalytic mechanism of dephosphorylation region; that stretch reads PIRPGR.

It belongs to the HPrK/P family. As to quaternary structure, homohexamer. Mg(2+) is required as a cofactor.

The catalysed reaction is [HPr protein]-L-serine + ATP = [HPr protein]-O-phospho-L-serine + ADP + H(+). It carries out the reaction [HPr protein]-O-phospho-L-serine + phosphate + H(+) = [HPr protein]-L-serine + diphosphate. Catalyzes the ATP- as well as the pyrophosphate-dependent phosphorylation of a specific serine residue in HPr, a phosphocarrier protein of the phosphoenolpyruvate-dependent sugar phosphotransferase system (PTS). HprK/P also catalyzes the pyrophosphate-producing, inorganic phosphate-dependent dephosphorylation (phosphorolysis) of seryl-phosphorylated HPr (P-Ser-HPr). The two antagonistic activities of HprK/P are regulated by several intracellular metabolites, which change their concentration in response to the absence or presence of rapidly metabolisable carbon sources (glucose, fructose, etc.) in the growth medium. Therefore, by controlling the phosphorylation state of HPr, HPrK/P is a sensor enzyme that plays a major role in the regulation of carbon metabolism and sugar transport: it mediates carbon catabolite repression (CCR), and regulates PTS-catalyzed carbohydrate uptake and inducer exclusion. The sequence is that of HPr kinase/phosphorylase from Clostridium kluyveri (strain NBRC 12016).